A 374-amino-acid polypeptide reads, in one-letter code: MKPLLETLYLLGMLVPGGLGYDRSLAQHRQEIVDKSVSPWSLETYSYNIYHPMGEIYEWMREISEKYKEVVTQHFLGVTYETHPMYYLKISQPSGNPKKIIWMDCGIHAREWIAPAFCQWFVKEILQNHKDNSSIRKLLRNLDFYVLPVLNIDGYIYTWTTDRLWRKSRSPHNNGTCFGTDLNRNFNASWCSIGASRNCQDQTFCGTGPVSEPETKAVASFIESKKDDILCFLTMHSYGQLILTPYGYTKNKSSNHPEMIQVGQKAANALKAKYGTNYRVGSSADILYASSGSSRDWARDIGIPFSYTFELRDSGTYGFVLPEAQIQPTCEETMEAVLSVLDDVYAKHWHSDSAGRVTSATMLLGLLVSCMSLL.

Residues 1 to 20 (MKPLLETLYLLGMLVPGGLG) form the signal peptide. Residues 49–344 (IYHPMGEIYE…EAVLSVLDDV (296 aa)) enclose the Peptidase M14 domain. Zn(2+) is bound by residues histidine 108 and glutamate 111. Asparagine 132, asparagine 174, and asparagine 187 each carry an N-linked (GlcNAc...) asparagine glycan. Residue histidine 236 participates in Zn(2+) binding. A glycan (N-linked (GlcNAc...) asparagine) is linked at asparagine 251. Catalysis depends on glutamate 310, which acts as the Proton donor/acceptor. Aspartate 352 is lipidated: GPI-anchor amidated aspartate. Residues 353–374 (SAGRVTSATMLLGLLVSCMSLL) constitute a propeptide, removed in mature form.

The protein belongs to the peptidase M14 family. It depends on Zn(2+) as a cofactor. N-glycosylated. In terms of tissue distribution, detected in enterocytes of the ileum.

The protein localises to the apical cell membrane. With respect to regulation, strongly inhibited by potato carboxypeptidase inhibitor, and the chelating agents EDTA and 1,10-phenanthroline. Also inhibited by compounds with multiple carboxylic acid groups such as citrate and succinate, and to a lesser exent the amino acids aspartate and glutamate. Not significantly inhibited by benzylsuccinic acid. Its function is as follows. Carboxypeptidase which preferentially cleaves C-terminal acidic residues from peptides and proteins. Can also cleave C-terminal hydrophobic amino acids, with a preference for small residues over large residues. The polypeptide is Carboxypeptidase O (Homo sapiens (Human)).